The following is a 366-amino-acid chain: Ribosomal RNA large subunit methyltransferase M (366 aa).

S-adenosyl-L-methionine contacts are provided by residues Ser188, 221 to 224 (CPGG), Asp240, Asp260, and Asp277. Catalysis depends on Lys306, which acts as the Proton acceptor.

The protein belongs to the class I-like SAM-binding methyltransferase superfamily. RNA methyltransferase RlmE family. RlmM subfamily. Monomer.

It localises to the cytoplasm. The enzyme catalyses cytidine(2498) in 23S rRNA + S-adenosyl-L-methionine = 2'-O-methylcytidine(2498) in 23S rRNA + S-adenosyl-L-homocysteine + H(+). Its function is as follows. Catalyzes the 2'-O-methylation at nucleotide C2498 in 23S rRNA. This is Ribosomal RNA large subunit methyltransferase M from Shigella flexneri serotype 5b (strain 8401).